The sequence spans 484 residues: FAD-dependent monooxygenase aurC (484 aa).

A signal peptide spans 1 to 21 (MGAYSFRVIIVGGSITGMTLA). Residues Glu-35, Gly-49, and Arg-108 each coordinate FAD. Tyr-216 is an active-site residue. FAD is bound by residues Asp-308 and Gly-321. The helical transmembrane segment at 451-471 (FAVASLIVLIVVLARALDSPA) threads the bilayer.

Belongs to the paxM FAD-dependent monooxygenase family. Requires FAD as cofactor.

It is found in the membrane. It functions in the pathway polyketide biosynthesis. FAD-dependent monooxygenase; part of the gene cluster that mediates the biosynthesis of aurovertins, fungal polyketides that exhibit potent inhibition of adenosine triphosphate synthase. Tha biosynthesis starts with the HR-PKS aurA that selects propionate as the starter unit; synthesizes a hexa-ene chain through the repeated functions of the KR and DH domains in the first six iterations; selectively introduces three alpha-methyl substitutions at C4, C6, and C16 using the S-adensylmethionine-dependent cMET; and shuts off KR and DH in the last three iterations to afford a 1,3,5-triketo portion that can undergo intramolecular cyclization to yield the alpha-pyrone intermediate. AurE may act as a cyclase and enhances the rate of pyrone formation and product release of aurA. The methyltransferase aurB then methylates the C17 hydroxyl group. C17 methylation is required to initiate epoxidation by the downstream monooxygenase aurC. The monooxygenase aurC and the epoxide hydrolase aurD can iteratively transform the terminal triene portion of the methylated precursor into the dioxabicyclo[3.2.1]octane scaffold of aurovertin E. Epoxidation modifications of the precursor occur in two separate steps; bis-epoxidation of the two terminal olefins takes place first, followed by another epoxidation that occurs at C7-C8 after tetrahydrofuran formation. The O-acyltransferase aurG converts aurovertin E to aurovertin A. This is FAD-dependent monooxygenase aurC from Calcarisporium arbuscula (Dendryphion arbuscula).